The primary structure comprises 359 residues: 3-isopropylmalate dehydrogenase (359 aa).

The substrate site is built by Arg96, Arg106, Arg134, and Asp223. The Mg(2+) site is built by Asp223, Asp247, and Asp251. 281-293 serves as a coordination point for NAD(+); that stretch reads GSAPDIAGQGIAN.

This sequence belongs to the isocitrate and isopropylmalate dehydrogenases family. LeuB type 1 subfamily. In terms of assembly, homodimer. The cofactor is Mg(2+). Mn(2+) serves as cofactor.

The protein localises to the cytoplasm. It catalyses the reaction (2R,3S)-3-isopropylmalate + NAD(+) = 4-methyl-2-oxopentanoate + CO2 + NADH. It participates in amino-acid biosynthesis; L-leucine biosynthesis; L-leucine from 3-methyl-2-oxobutanoate: step 3/4. Functionally, catalyzes the oxidation of 3-carboxy-2-hydroxy-4-methylpentanoate (3-isopropylmalate) to 3-carboxy-4-methyl-2-oxopentanoate. The product decarboxylates to 4-methyl-2 oxopentanoate. The chain is 3-isopropylmalate dehydrogenase from Chromohalobacter salexigens (strain ATCC BAA-138 / DSM 3043 / CIP 106854 / NCIMB 13768 / 1H11).